We begin with the raw amino-acid sequence, 704 residues long: Polyribonucleotide nucleotidyltransferase (704 aa).

Mg(2+) contacts are provided by aspartate 486 and aspartate 492. The 60-residue stretch at 553-612 folds into the KH domain; sequence PRIYTMKINPEKIKDVIGKGGSVIRALTDETGTTIEIEDDGTIKIAATDGDKAKHAIRRI. The S1 motif domain maps to 622–690; it reads GRIYAGKVTR…RQGRIRLSIK (69 aa).

Belongs to the polyribonucleotide nucleotidyltransferase family. Component of the RNA degradosome, which is a multiprotein complex involved in RNA processing and mRNA degradation. It depends on Mg(2+) as a cofactor.

It is found in the cytoplasm. The catalysed reaction is RNA(n+1) + phosphate = RNA(n) + a ribonucleoside 5'-diphosphate. Involved in mRNA degradation. Catalyzes the phosphorolysis of single-stranded polyribonucleotides processively in the 3'- to 5'-direction. This Yersinia pseudotuberculosis serotype IB (strain PB1/+) protein is Polyribonucleotide nucleotidyltransferase.